A 349-amino-acid polypeptide reads, in one-letter code: Soluble TNF receptor II (349 aa).

Positions 1–19 are cleaved as a signal peptide; that stretch reads MKSVLYSYILFLSCIIING. TNFR-Cys repeat units lie at residues 31-65 and 67-108; these read KCKD…NTQC and PCGS…NRIC. 6 disulfides stabilise this stretch: Cys-32/Cys-43, Cys-44/Cys-57, Cys-47/Cys-65, Cys-68/Cys-83, Cys-86/Cys-100, and Cys-90/Cys-108. Asn-101, Asn-189, and Asn-248 each carry an N-linked (GlcNAc...) asparagine; by host glycan.

The protein belongs to the orthopoxvirus OPG002 family.

In terms of biological role, inhibits host immune defense by binding to host TNF and various chemokines in the extracellular space. Binds host CC chemokines (beta chemokines) and CXC chemokines (alpha chemokines). The sequence is that of Soluble TNF receptor II (OPG002) from Camelus.